The sequence spans 285 residues: Thrombin-like enzyme TLBm (285 aa).

The Peptidase S1 domain occupies 1-273; that stretch reads VIGGDECNIN…HLDWSQSVIA (273 aa). Disulfide bonds link Cys7–Cys181, Cys30–Cys46, Cys94–Cys284, Cys156–Cys234, Cys192–Cys209, and Cys224–Cys249. Active-site charge relay system residues include His45 and Asp113. Ser228 functions as the Charge relay system in the catalytic mechanism.

It belongs to the peptidase S1 family. Snake venom subfamily. As to quaternary structure, monomer. Post-translationally, homologous thrombin-like enzymes are N-glycosylated. This enzyme does not contain the consensus glycosylation sites, suggesting it is not glycosylated. As to expression, expressed by the venom gland.

The protein resides in the secreted. With respect to regulation, inhibited by PMSF, disodium-EDTA, S(Dm) and soybean trypsin inhibitor (SBTI). SBTI and S(Dm) (the anti-hemorrhagic protein) acts as a non-competitive inhibitors that decrease the enzymatic activity. Functionally, thrombin-like enzyme that induces the formation of fibrin clot. Cleaves the Aalpha-chain of fibrinogen (FGA) with higher activity than the Bbeta-chain (FGB). Induces platelet aggregation in both platelet-rich plasma and in washed platelet preparations. This aggregation is strongly inhibited by preincubation of the enzyme with PMSF. The chain is Thrombin-like enzyme TLBm from Bothrops marajoensis (Marajo lancehead).